Here is a 189-residue protein sequence, read N- to C-terminus: Putative lipoprotein LppK (189 aa).

The signal sequence occupies residues Met-1–Gly-22. A lipid anchor (N-palmitoyl cysteine) is attached at Cys-23. The S-diacylglycerol cysteine moiety is linked to residue Cys-23. 2 disordered regions span residues Pro-26 to Ala-49 and Met-166 to Gly-189. Residues Ser-169–Pro-179 are compositionally biased toward low complexity. Positions Ala-180–Gly-189 are enriched in pro residues.

Belongs to the MTB12 family.

The protein localises to the cell membrane. This is Putative lipoprotein LppK (lppK) from Mycobacterium tuberculosis (strain CDC 1551 / Oshkosh).